Consider the following 226-residue polypeptide: Endonuclease V (226 aa).

Asp-43 and Asp-109 together coordinate Mg(2+).

Belongs to the endonuclease V family. It depends on Mg(2+) as a cofactor.

It localises to the cytoplasm. It carries out the reaction Endonucleolytic cleavage at apurinic or apyrimidinic sites to products with a 5'-phosphate.. In terms of biological role, DNA repair enzyme involved in the repair of deaminated bases. Selectively cleaves double-stranded DNA at the second phosphodiester bond 3' to a deoxyinosine leaving behind the intact lesion on the nicked DNA. This Kosmotoga olearia (strain ATCC BAA-1733 / DSM 21960 / TBF 19.5.1) protein is Endonuclease V.